The sequence spans 357 residues: Probable xyloglucan endotransglucosylase/hydrolase protein 29 (357 aa).

The first 31 residues, 1–31 (MRDSIYLLWIDNRLVVIIMMVMMVSCRCVLG), serve as a signal peptide directing secretion. Positions 32-232 (LENINPIFFD…YTFSPFVSEF (201 aa)) constitute a GH16 domain. Glutamate 117 functions as the Nucleophile in the catalytic mechanism. Glutamate 121 functions as the Proton donor in the catalytic mechanism. Xyloglucan contacts are provided by residues glutamate 121 and 134 to 136 (QTN). An N-linked (GlcNAc...) asparagine glycan is attached at asparagine 140. Xyloglucan contacts are provided by residues 144 to 148 (NRGRE), 211 to 212 (SW), and glycine 216. Residues asparagine 241 and asparagine 262 are each glycosylated (N-linked (GlcNAc...) asparagine). Cysteine 299 and cysteine 312 are joined by a disulfide. Arginine 304 provides a ligand contact to xyloglucan. The disordered stretch occupies residues 326 to 357 (GRLKFGGSHPKVHKARKKRRRNRSTPVVSADL). A compositionally biased stretch (basic residues) spans 335-348 (PKVHKARKKRRRNR). N-linked (GlcNAc...) asparagine glycosylation occurs at asparagine 347.

This sequence belongs to the glycosyl hydrolase 16 family. XTH group 3 subfamily. In terms of processing, contains at least one intrachain disulfide bond essential for its enzymatic activity.

It localises to the secreted. Its subcellular location is the cell wall. It is found in the extracellular space. The protein localises to the apoplast. It carries out the reaction breaks a beta-(1-&gt;4) bond in the backbone of a xyloglucan and transfers the xyloglucanyl segment on to O-4 of the non-reducing terminal glucose residue of an acceptor, which can be a xyloglucan or an oligosaccharide of xyloglucan.. Catalyzes xyloglucan endohydrolysis (XEH) and/or endotransglycosylation (XET). Cleaves and religates xyloglucan polymers, an essential constituent of the primary cell wall, and thereby participates in cell wall construction of growing tissues. In Arabidopsis thaliana (Mouse-ear cress), this protein is Probable xyloglucan endotransglucosylase/hydrolase protein 29 (XTH29).